The sequence spans 127 residues: Putative membrane protein insertion efficiency factor (127 aa).

The interval 71–106 is disordered; it reads DPPPPPRLHRAAAARMPRQRDADPRDTTRCSSTGAE. Positions 88–98 are enriched in basic and acidic residues; it reads RQRDADPRDTT.

This sequence belongs to the UPF0161 family.

The protein localises to the cell inner membrane. In terms of biological role, could be involved in insertion of integral membrane proteins into the membrane. The chain is Putative membrane protein insertion efficiency factor from Sorangium cellulosum (strain So ce56) (Polyangium cellulosum (strain So ce56)).